The following is a 147-amino-acid chain: Hemoglobin subunit beta-2 (147 aa).

One can recognise a Globin domain in the interval 3–147 (EWTDSERAII…VVSALGRQYH (145 aa)). 2 residues coordinate heme b: H64 and H93.

It belongs to the globin family. As to quaternary structure, hb 3 is a heterotetramer of two alpha-2 and two beta-2 chains. Red blood cells.

In terms of biological role, involved in oxygen transport from gills to the various peripheral tissues. This chain is Hemoglobin subunit beta-2 (hbb2), found in Arctogadus glacialis (Arctic cod).